A 424-amino-acid polypeptide reads, in one-letter code: tRNA modification GTPase MnmE (424 aa).

The (6S)-5-formyl-5,6,7,8-tetrahydrofolate site is built by Arg-20, Glu-77, and Arg-117. One can recognise a TrmE-type G domain in the interval 212-351 (GVRVVFAGPP…LVRDLRDAAR (140 aa)). Asn-222 is a K(+) binding site. Residues 222-227 (NAGKST), 241-247 (SPIAGTT), and 266-269 (DTAG) contribute to the GTP site. Position 226 (Ser-226) interacts with Mg(2+). The K(+) site is built by Ser-241, Ile-243, and Thr-246. A Mg(2+)-binding site is contributed by Thr-247. Position 424 (Lys-424) interacts with (6S)-5-formyl-5,6,7,8-tetrahydrofolate.

Belongs to the TRAFAC class TrmE-Era-EngA-EngB-Septin-like GTPase superfamily. TrmE GTPase family. As to quaternary structure, homodimer. Heterotetramer of two MnmE and two MnmG subunits. K(+) is required as a cofactor.

Its subcellular location is the cytoplasm. In terms of biological role, exhibits a very high intrinsic GTPase hydrolysis rate. Involved in the addition of a carboxymethylaminomethyl (cmnm) group at the wobble position (U34) of certain tRNAs, forming tRNA-cmnm(5)s(2)U34. The chain is tRNA modification GTPase MnmE from Erythrobacter litoralis (strain HTCC2594).